Reading from the N-terminus, the 1242-residue chain is DNA-directed RNA polymerase RPB2 homolog (1242 aa).

The C4-type zinc finger occupies 1180–1201 (CRNCGEPAIYNASHPIYKCMNC).

This sequence belongs to the RNA polymerase beta chain family. Part of the viral DNA-directed RNA polymerase that consists of 8 polII-like subunits (RPB1, RPB2, RPB3, RPB5, RPB6, RPB7, RPB9, RPB10), a capping enzyme and a termination factor.

It localises to the host cytoplasm. Its subcellular location is the virion. It carries out the reaction RNA(n) + a ribonucleoside 5'-triphosphate = RNA(n+1) + diphosphate. In terms of biological role, catalytic component of the DNA-directed RNA polymerase (RNAP) that catalyzes the transcription in the cytoplasm of viral DNA into RNA using the four ribonucleoside triphosphates as substrates. Forms the polymerase active center together with RPB1. Part of the core element with the central large cleft, the clamp element that moves to open and close the cleft and the jaws that are thought to grab the incoming DNA template. This Ornithodoros (relapsing fever ticks) protein is DNA-directed RNA polymerase RPB2 homolog.